Consider the following 134-residue polypeptide: Small ribosomal subunit protein uS12 (134 aa).

The interval 1-26 is disordered; that stretch reads MPTTQQLLRKGRTTLQKKSKVPALKG. Positions 9–20 are enriched in basic residues; that stretch reads RKGRTTLQKKSK. The residue at position 89 (Asp-89) is a 3-methylthioaspartic acid. The disordered stretch occupies residues 103 to 134; the sequence is DTQGVKDRNKSRSKYGTKKPKAGAAAAGAKKK. The segment covering 113 to 123 has biased composition (basic residues); the sequence is SRSKYGTKKPK. Residues 124 to 134 show a composition bias toward low complexity; sequence AGAAAAGAKKK.

The protein belongs to the universal ribosomal protein uS12 family. In terms of assembly, part of the 30S ribosomal subunit. Contacts proteins S8 and S17. May interact with IF1 in the 30S initiation complex.

With S4 and S5 plays an important role in translational accuracy. In terms of biological role, interacts with and stabilizes bases of the 16S rRNA that are involved in tRNA selection in the A site and with the mRNA backbone. Located at the interface of the 30S and 50S subunits, it traverses the body of the 30S subunit contacting proteins on the other side and probably holding the rRNA structure together. The combined cluster of proteins S8, S12 and S17 appears to hold together the shoulder and platform of the 30S subunit. The chain is Small ribosomal subunit protein uS12 from Deinococcus geothermalis (strain DSM 11300 / CIP 105573 / AG-3a).